The chain runs to 158 residues: Small ribosomal subunit protein uS9 (158 aa).

Belongs to the universal ribosomal protein uS9 family.

In Rhodopseudomonas palustris (strain HaA2), this protein is Small ribosomal subunit protein uS9.